The chain runs to 198 residues: Probable chemoreceptor glutamine deamidase CheD (198 aa).

This sequence belongs to the CheD family.

It catalyses the reaction L-glutaminyl-[protein] + H2O = L-glutamyl-[protein] + NH4(+). Its function is as follows. Probably deamidates glutamine residues to glutamate on methyl-accepting chemotaxis receptors (MCPs), playing an important role in chemotaxis. This Xanthomonas euvesicatoria pv. vesicatoria (strain 85-10) (Xanthomonas campestris pv. vesicatoria) protein is Probable chemoreceptor glutamine deamidase CheD.